The following is a 701-amino-acid chain: Elongation factor G 2 (701 aa).

Residues 8 to 291 form the tr-type G domain; that stretch reads ERYRNIGISA…AVIDYLPSPA (284 aa). GTP is bound by residues 17–24, 88–92, and 142–145; these read AHIDAGKT, DTPGH, and NKMD.

Belongs to the TRAFAC class translation factor GTPase superfamily. Classic translation factor GTPase family. EF-G/EF-2 subfamily.

It localises to the cytoplasm. Its function is as follows. Catalyzes the GTP-dependent ribosomal translocation step during translation elongation. During this step, the ribosome changes from the pre-translocational (PRE) to the post-translocational (POST) state as the newly formed A-site-bound peptidyl-tRNA and P-site-bound deacylated tRNA move to the P and E sites, respectively. Catalyzes the coordinated movement of the two tRNA molecules, the mRNA and conformational changes in the ribosome. The chain is Elongation factor G 2 from Burkholderia lata (strain ATCC 17760 / DSM 23089 / LMG 22485 / NCIMB 9086 / R18194 / 383).